The following is a 347-amino-acid chain: 4-hydroxy-2-oxovalerate aldolase (347 aa).

The 251-residue stretch at 2–252 (ILISDATLRD…DTRTTFERVM (251 aa)) folds into the Pyruvate carboxyltransferase domain. 10–11 (RD) serves as a coordination point for substrate. Position 11 (Asp11) interacts with Mn(2+). His14 serves as the catalytic Proton acceptor. Substrate-binding residues include Ser164 and His191. Residues His191 and His193 each coordinate Mn(2+).

Belongs to the 4-hydroxy-2-oxovalerate aldolase family.

It catalyses the reaction (S)-4-hydroxy-2-oxopentanoate = acetaldehyde + pyruvate. This is 4-hydroxy-2-oxovalerate aldolase (mhpE) from Burkholderia pseudomallei (strain K96243).